Consider the following 164-residue polypeptide: Phosphopantetheine adenylyltransferase (164 aa).

Position 10 (S10) interacts with substrate. Residues 10 to 11 (SF) and H18 contribute to the ATP site. The substrate site is built by K42, T79, and R93. Residues 94–96 (GLR), E104, and 129–135 (VRPITAS) contribute to the ATP site.

The protein belongs to the bacterial CoaD family. Homohexamer. Mg(2+) serves as cofactor.

It localises to the cytoplasm. The enzyme catalyses (R)-4'-phosphopantetheine + ATP + H(+) = 3'-dephospho-CoA + diphosphate. It functions in the pathway cofactor biosynthesis; coenzyme A biosynthesis; CoA from (R)-pantothenate: step 4/5. Functionally, reversibly transfers an adenylyl group from ATP to 4'-phosphopantetheine, yielding dephospho-CoA (dPCoA) and pyrophosphate. This is Phosphopantetheine adenylyltransferase from Bradyrhizobium sp. (strain ORS 278).